Reading from the N-terminus, the 41-residue chain is Large ribosomal subunit protein bL36 (41 aa).

It belongs to the bacterial ribosomal protein bL36 family.

In Hydrogenovibrio crunogenus (strain DSM 25203 / XCL-2) (Thiomicrospira crunogena), this protein is Large ribosomal subunit protein bL36.